Reading from the N-terminus, the 261-residue chain is Nickel import ATP-binding protein NikD (261 aa).

The ABC transporter domain occupies 6–248 (LRIEGLTIAT…PRHDATRALV (243 aa)). Position 41-48 (41-48 (GASGSGKS)) interacts with ATP.

Belongs to the ABC transporter superfamily. Nickel importer (TC 3.A.1.5.3) family. In terms of assembly, the complex is composed of two ATP-binding proteins (NikD and NikE), two transmembrane proteins (NikB and NikC) and a solute-binding protein (NikA).

It is found in the cell inner membrane. It catalyses the reaction Ni(2+)(out) + ATP + H2O = Ni(2+)(in) + ADP + phosphate + H(+). Part of the ABC transporter complex NikABCDE involved in nickel import. Responsible for energy coupling to the transport system. In Rhodospirillum rubrum (strain ATCC 11170 / ATH 1.1.1 / DSM 467 / LMG 4362 / NCIMB 8255 / S1), this protein is Nickel import ATP-binding protein NikD.